Consider the following 323-residue polypeptide: 4-hydroxyphenylpyruvate 3-dimethylallyltransferase (323 aa).

Residues R160 and E281 each contribute to the substrate site.

Belongs to the aromatic prenyltransferase family. Monomer.

The protein localises to the cytoplasm. It catalyses the reaction 3-(4-hydroxyphenyl)pyruvate + dimethylallyl diphosphate = 3-dimethylallyl-4-hydroxyphenylpyruvate + diphosphate. The protein operates within antibiotic biosynthesis; novobiocin biosynthesis. Functionally, magnesium-independent aromatic prenyltransferase that catalyzes the irreversible transfer of a dimethylallyl group to 4-hydroxyphenylpyruvate to produce the ring A structure in the novobiocin biosynthesis pathway. Novobiocin is an aminocoumarin family antibiotic that targets bacterial DNA gyrases. It is able to prenylate many different compounds, including the phenylpropanoids 4-coumarate and caffeate, the plant polyketide resveratrol, the (iso)flavonoid naringenin, apigenin, daidzein and genistein, and the dihydroxynaphthalenes 1,6-DHN and 2,7-DHN. The chain is 4-hydroxyphenylpyruvate 3-dimethylallyltransferase from Streptomyces niveus (Streptomyces spheroides).